Consider the following 671-residue polypeptide: Arginine--tRNA ligase (671 aa).

The 'HIGH' region signature appears at Pro124–His134. A disordered region spans residues Lys223–Ala254. Residues Ser224 to Ser233 are compositionally biased toward basic and acidic residues.

The protein belongs to the class-I aminoacyl-tRNA synthetase family. In terms of assembly, monomer.

The protein localises to the cytoplasm. It catalyses the reaction tRNA(Arg) + L-arginine + ATP = L-arginyl-tRNA(Arg) + AMP + diphosphate. This Rhodopirellula baltica (strain DSM 10527 / NCIMB 13988 / SH1) protein is Arginine--tRNA ligase.